The primary structure comprises 250 residues: HTH-type transcriptional regulator SarS (250 aa).

2 consecutive DNA-binding regions (H-T-H motif) follow at residues 53-76 (FKKIVSDLCYKQSDLVQHIKVLVK) and 177-200 (LKDLIETIHHKYPQTVRALNNLKK).

It belongs to the SarA family.

The protein resides in the cytoplasm. In terms of biological role, transcriptional regulator that controls expression of some virulence factors in a cell density-dependent manner. The protein is HTH-type transcriptional regulator SarS (sarS) of Staphylococcus aureus (strain MRSA252).